Consider the following 155-residue polypeptide: MTVNPDAPALPTLPLAVETIQGLLPHRYPFALVDRIIDYVPGERAVGIKNVTFNEPQFQGHFPGRPLMPGVLIVEAMAQVGGVIVTLMPDMPQGLFVFAGIDQVRFRRPVVPGDQLVLSAQLLSVKRRRFCKIQGEAMVDGQLAASGELLFSLVE.

His61 is an active-site residue.

The protein belongs to the thioester dehydratase family. FabZ subfamily.

It is found in the cytoplasm. The catalysed reaction is a (3R)-hydroxyacyl-[ACP] = a (2E)-enoyl-[ACP] + H2O. Involved in unsaturated fatty acids biosynthesis. Catalyzes the dehydration of short chain beta-hydroxyacyl-ACPs and long chain saturated and unsaturated beta-hydroxyacyl-ACPs. This is 3-hydroxyacyl-[acyl-carrier-protein] dehydratase FabZ from Synechococcus elongatus (strain ATCC 33912 / PCC 7942 / FACHB-805) (Anacystis nidulans R2).